We begin with the raw amino-acid sequence, 343 residues long: Small ribosomal subunit biogenesis GTPase RsgA (343 aa).

Positions 116–275 (RGQLKPVAAN…LIDSPGIREF (160 aa)) constitute a CP-type G domain. GTP is bound by residues 163-166 (NKAD) and 217-225 (GQSGVGKSS). 4 residues coordinate Zn(2+): Cys-299, Cys-304, His-306, and Cys-312.

Belongs to the TRAFAC class YlqF/YawG GTPase family. RsgA subfamily. As to quaternary structure, monomer. Associates with 30S ribosomal subunit, binds 16S rRNA. Zn(2+) is required as a cofactor.

It is found in the cytoplasm. In terms of biological role, one of several proteins that assist in the late maturation steps of the functional core of the 30S ribosomal subunit. Helps release RbfA from mature subunits. May play a role in the assembly of ribosomal proteins into the subunit. Circularly permuted GTPase that catalyzes slow GTP hydrolysis, GTPase activity is stimulated by the 30S ribosomal subunit. This Ectopseudomonas mendocina (strain ymp) (Pseudomonas mendocina) protein is Small ribosomal subunit biogenesis GTPase RsgA.